Consider the following 152-residue polypeptide: Cytochrome c-type biogenesis protein CcmE (152 aa).

The Cytoplasmic segment spans residues 1–9 (MRGLKKQRR). A helical; Signal-anchor for type II membrane protein membrane pass occupies residues 10–30 (IQILIVAAVALTLSSVLIGYA). Over 31 to 152 (LRDGINFFRP…PDGYARDGDS (122 aa)) the chain is Periplasmic. Residues His123 and Tyr127 each contribute to the heme site.

It belongs to the CcmE/CycJ family.

Its subcellular location is the cell inner membrane. Functionally, heme chaperone required for the biogenesis of c-type cytochromes. Transiently binds heme delivered by CcmC and transfers the heme to apo-cytochromes in a process facilitated by CcmF and CcmH. In Jannaschia sp. (strain CCS1), this protein is Cytochrome c-type biogenesis protein CcmE.